A 224-amino-acid chain; its full sequence is SPI-2 type 3 secretion system stator protein (224 aa).

The protein belongs to the SctL stator family. The core secretion machinery of the T3SS is composed of approximately 20 different proteins, including cytoplasmic components, a base, an export apparatus and a needle. This subunit is part of the cytosolic complex. Interacts directly with SsaN/SctN2 (T3SS-2 ATPase).

The protein localises to the cytoplasm. Its function is as follows. Component of the type III secretion system (T3SS), also called injectisome, which is used to inject bacterial effector proteins into eukaryotic host cells. Acts as a regulator of the SsaN/SctN2 ATPase activity. The sequence is that of SPI-2 type 3 secretion system stator protein from Salmonella typhimurium (strain LT2 / SGSC1412 / ATCC 700720).